We begin with the raw amino-acid sequence, 188 residues long: Elongation factor P (188 aa).

Belongs to the elongation factor P family.

The protein resides in the cytoplasm. It participates in protein biosynthesis; polypeptide chain elongation. Its function is as follows. Involved in peptide bond synthesis. Stimulates efficient translation and peptide-bond synthesis on native or reconstituted 70S ribosomes in vitro. Probably functions indirectly by altering the affinity of the ribosome for aminoacyl-tRNA, thus increasing their reactivity as acceptors for peptidyl transferase. The protein is Elongation factor P of Cereibacter sphaeroides (strain KD131 / KCTC 12085) (Rhodobacter sphaeroides).